A 450-amino-acid polypeptide reads, in one-letter code: UDP-N-acetylmuramoylalanine--D-glutamate ligase (450 aa).

Position 119-125 (119-125) interacts with ATP; it reads GSNGKTT.

This sequence belongs to the MurCDEF family.

The protein localises to the cytoplasm. It catalyses the reaction UDP-N-acetyl-alpha-D-muramoyl-L-alanine + D-glutamate + ATP = UDP-N-acetyl-alpha-D-muramoyl-L-alanyl-D-glutamate + ADP + phosphate + H(+). Its pathway is cell wall biogenesis; peptidoglycan biosynthesis. In terms of biological role, cell wall formation. Catalyzes the addition of glutamate to the nucleotide precursor UDP-N-acetylmuramoyl-L-alanine (UMA). The sequence is that of UDP-N-acetylmuramoylalanine--D-glutamate ligase from Streptococcus pneumoniae (strain Hungary19A-6).